The chain runs to 129 residues: Aspartate 1-decarboxylase (129 aa).

The active-site Schiff-base intermediate with substrate; via pyruvic acid is the Ser25. Ser25 carries the pyruvic acid (Ser) modification. Position 57 (Thr57) interacts with substrate. Tyr58 acts as the Proton donor in catalysis. Residue 73–75 (GAA) participates in substrate binding.

Belongs to the PanD family. As to quaternary structure, heterooctamer of four alpha and four beta subunits. Requires pyruvate as cofactor. Is synthesized initially as an inactive proenzyme, which is activated by self-cleavage at a specific serine bond to produce a beta-subunit with a hydroxyl group at its C-terminus and an alpha-subunit with a pyruvoyl group at its N-terminus.

Its subcellular location is the cytoplasm. It catalyses the reaction L-aspartate + H(+) = beta-alanine + CO2. It participates in cofactor biosynthesis; (R)-pantothenate biosynthesis; beta-alanine from L-aspartate: step 1/1. Catalyzes the pyruvoyl-dependent decarboxylation of aspartate to produce beta-alanine. The chain is Aspartate 1-decarboxylase from Hydrogenovibrio crunogenus (strain DSM 25203 / XCL-2) (Thiomicrospira crunogena).